The primary structure comprises 522 residues: Protein RCC2 (522 aa).

A disordered region spans residues Met1–Val83. Residue Ser16 is modified to Phosphoserine. Residue Thr20 is modified to Phosphothreonine. A compositionally biased stretch (basic residues) spans Gly24–Arg36. Phosphoserine is present on residues Ser43, Ser44, Ser45, Ser46, Ser50, and Ser51. Low complexity predominate over residues Arg71 to Ala82. Residues Lys92 and Lys124 each carry the N6-acetyllysine modification. RCC1 repeat units follow at residues Lys103 to Ile165, Glu168 to Glu219, Gly221 to Cys271, Gly273 to Ser347, Gln348 to Glu401, Gly403 to Asp447, and Glu448 to Arg501. N6-acetyllysine is present on Lys293. A required for interaction with RAC1 region spans residues Lys318–Leu325. Residue Thr342 is modified to Phosphothreonine. Residue Lys377 is modified to N6-acetyllysine. Basic and acidic residues predominate over residues Asp502 to Pro515. Positions Asp502–Leu522 are disordered.

In terms of assembly, interacts with RAC1. Interacts with nucleotide-free and with GDP and GTP-bound forms of RAC1, with a slight preference for GDP-bound RAC1. Binds preferentially to the nucleotide-free form of RAC1. Interacts with CORO1C. Interacts with microtubules.

It localises to the nucleus. The protein localises to the nucleolus. It is found in the cytoplasm. The protein resides in the cytoskeleton. Its subcellular location is the chromosome. It localises to the centromere. The protein localises to the spindle. It is found in the midbody. The protein resides in the cell membrane. Functionally, multifunctional protein that may affect its functions by regulating the activity of small GTPases, such as RAC1 and RALA. Required for normal progress through the cell cycle, both during interphase and during mitosis. Required for the presence of normal levels of MAD2L1, AURKB and BIRC5 on inner centromeres during mitosis, and for normal attachment of kinetochores to mitotic spindles. Required for normal organization of the microtubule cytoskeleton in interphase cells. Functions as guanine nucleotide exchange factor (GEF) for RALA. Interferes with the activation of RAC1 by guanine nucleotide exchange factors. Prevents accumulation of active, GTP-bound RAC1, and suppresses RAC1-mediated reorganization of the actin cytoskeleton and formation of membrane protrusions. Required for normal cellular responses to contacts with the extracellular matrix of adjacent cells, and for directional cell migration in response to a fibronectin gradient (in vitro). The chain is Protein RCC2 (RCC2) from Homo sapiens (Human).